Consider the following 293-residue polypeptide: Aromatic amino acid exporter YddG (293 aa).

At 1–6 (MTSQKA) the chain is on the cytoplasmic side. A helical transmembrane segment spans residues 7-27 (TLIGLVAIVLWSTMVGLIRGV). The EamA 1 domain maps to 15-137 (VLWSTMVGLI…IALTGVCWVL (123 aa)). Topologically, residues 28 to 33 (SEGLGP) are periplasmic. Residues 34-54 (VGGAAMIYSLSGLLLIFTVGL) form a helical membrane-spanning segment. The Cytoplasmic portion of the chain corresponds to 55 to 63 (PDIRRFPGR). Residues 64-84 (YLIAGSVLFVSYEICLALSLG) form a helical membrane-spanning segment. The Periplasmic portion of the chain corresponds to 85–92 (YAATRHQA). Residues 93 to 113 (IEVGMVNYLWPSLTILFAILF) form a helical membrane-spanning segment. Topologically, residues 114-119 (NGQKTN) are cytoplasmic. A helical membrane pass occupies residues 120 to 140 (WLIVPGLLIALTGVCWVLGGE). Over 141–147 (NGLNPGE) the chain is Periplasmic. Residues 148–168 (IISNVATSPLSYLLAFLGAFI) form a helical membrane-spanning segment. Residues 167 to 285 (FIWATYCTVT…AVMVCVGSLL (119 aa)) enclose the EamA 2 domain. Topologically, residues 169–182 (WATYCTVTNKYARG) are cytoplasmic. The helical transmembrane segment at 183-203 (FNGITVFVLLTAVALWLHYFL) threads the bilayer. The Periplasmic portion of the chain corresponds to 204–207 (TPQP). Residues 208–228 (AMIFSLPVIAKLFTAALTLGF) traverse the membrane as a helical segment. At 229-243 (AYAAWNVGILHGNVT) the chain is on the cytoplasmic side. The helical transmembrane segment at 244 to 264 (IMAVGSYFTPVMSSALAALLL) threads the bilayer. At 265–267 (SSP) the chain is on the periplasmic side. A helical membrane pass occupies residues 268 to 288 (LSFSFWQGAVMVCVGSLLCWL). Residues 289-293 (ATRRR) are Cytoplasmic-facing.

It belongs to the drug/metabolite transporter (DMT) superfamily. Aromatic amino acid/paraquat exporter (ArAA/P-E) (TC 2.A.7.17) family.

The protein resides in the cell inner membrane. In terms of biological role, amino acid transporter with broad substrate specificity. Required for resistance to methyl viologen. May function with OmpD porin. The chain is Aromatic amino acid exporter YddG (yddG) from Salmonella typhimurium (strain 14028s / SGSC 2262).